The chain runs to 221 residues: Large ribosomal subunit protein uL16x (221 aa).

This sequence belongs to the universal ribosomal protein uL16 family. As to quaternary structure, component of the small ribosomal subunit. Mature ribosomes consist of a small (40S) and a large (60S) subunit. The 40S subunit contains about 33 different proteins and 1 molecule of RNA (18S). The 60S subunit contains about 49 different proteins and 3 molecules of RNA (25S, 5.8S and 5S).

This Arabidopsis thaliana (Mouse-ear cress) protein is Large ribosomal subunit protein uL16x (RPL10C).